We begin with the raw amino-acid sequence, 459 residues long: tRNA modification GTPase MnmE (459 aa).

Positions 23, 88, and 127 each coordinate (6S)-5-formyl-5,6,7,8-tetrahydrofolate. The TrmE-type G domain occupies 223–381; the sequence is GLDVVIVGKP…LKEYIKDLFF (159 aa). Residue N233 participates in K(+) binding. GTP is bound by residues 233–238, 252–258, and 277–280; these read NVGKSS, TEIPGTT, and DTAG. S237 is a Mg(2+) binding site. 3 residues coordinate K(+): T252, I254, and T257. Mg(2+) is bound at residue T258. K459 contributes to the (6S)-5-formyl-5,6,7,8-tetrahydrofolate binding site.

It belongs to the TRAFAC class TrmE-Era-EngA-EngB-Septin-like GTPase superfamily. TrmE GTPase family. As to quaternary structure, homodimer. Heterotetramer of two MnmE and two MnmG subunits. Requires K(+) as cofactor.

It localises to the cytoplasm. Its function is as follows. Exhibits a very high intrinsic GTPase hydrolysis rate. Involved in the addition of a carboxymethylaminomethyl (cmnm) group at the wobble position (U34) of certain tRNAs, forming tRNA-cmnm(5)s(2)U34. This is tRNA modification GTPase MnmE from Clostridium tetani (strain Massachusetts / E88).